The sequence spans 144 residues: Large ribosomal subunit protein uL15 (144 aa).

Positions 1-44 (MNLNELQPAAGSRHVRNRVGRGTSSGNGKTSGRGQKGQKARGKV) are disordered. A compositionally biased stretch (gly residues) spans 23–35 (TSSGNGKTSGRGQ).

The protein belongs to the universal ribosomal protein uL15 family. Part of the 50S ribosomal subunit.

Binds to the 23S rRNA. The protein is Large ribosomal subunit protein uL15 of Leuconostoc mesenteroides subsp. mesenteroides (strain ATCC 8293 / DSM 20343 / BCRC 11652 / CCM 1803 / JCM 6124 / NCDO 523 / NBRC 100496 / NCIMB 8023 / NCTC 12954 / NRRL B-1118 / 37Y).